A 423-amino-acid chain; its full sequence is Glycine amidinotransferase, mitochondrial (423 aa).

A mitochondrion-targeting transit peptide spans 1–43 (MLRVRCLRGGSRGAEAVHYIGSRLGRTLTGWVQRTFQSTQAAT). Phosphoserine occurs at positions 46 and 49. Aspartate 170 serves as a coordination point for arginine. Active-site residues include aspartate 254 and histidine 303. Positions 305, 322, 354, and 355 each coordinate arginine. Lysine 385 is subject to N6-acetyllysine. Cysteine 407 serves as the catalytic Amidino-cysteine intermediate.

Belongs to the amidinotransferase family. In terms of assembly, homodimer. There is an equilibrium between the monomeric and dimeric forms, shifted towards the side of the monomer. As to expression, expressed in brain, heart, kidney, liver, lung, salivary gland and skeletal muscle tissue, with the highest expression in kidney. Biallelically expressed in placenta and fetal tissues.

It localises to the mitochondrion inner membrane. The protein resides in the cytoplasm. It carries out the reaction L-arginine + glycine = guanidinoacetate + L-ornithine. It catalyses the reaction 4-aminobutanoate + L-arginine = 4-guanidinobutanoate + L-ornithine. The catalysed reaction is beta-alanine + L-arginine = 3-guanidinopropanoate + L-ornithine. The enzyme catalyses taurine + L-arginine = taurocyamine + L-ornithine. It participates in amine and polyamine biosynthesis; creatine biosynthesis; creatine from L-arginine and glycine: step 1/2. In terms of biological role, transamidinase that catalyzes the transfer of the amidino group of L-arginine onto the amino moiety of acceptor metabolites such as glycine, beta-alanine, gamma-aminobutyric acid (GABA) and taurine yielding the corresponding guanidine derivatives. Catalyzes the rate-limiting step of creatine biosynthesis, namely the transfer of the amidino group from L-arginine to glycine to generate guanidinoacetate, which is then methylated by GAMT to form creatine. Provides creatine as a source for ATP generation in tissues with high energy demands, in particular skeletal muscle, heart and brain. The chain is Glycine amidinotransferase, mitochondrial (GATM) from Homo sapiens (Human).